A 167-amino-acid chain; its full sequence is Glucose-6-phosphate isomerase (167 aa).

Catalysis depends on Glu54, which acts as the Proton donor. Residue His85 is part of the active site.

The protein belongs to the GPI family.

The protein resides in the cytoplasm. The catalysed reaction is alpha-D-glucose 6-phosphate = beta-D-fructose 6-phosphate. Its pathway is carbohydrate biosynthesis; gluconeogenesis. It participates in carbohydrate degradation; glycolysis; D-glyceraldehyde 3-phosphate and glycerone phosphate from D-glucose: step 2/4. Functionally, catalyzes the reversible isomerization of glucose-6-phosphate to fructose-6-phosphate. This Klebsiella oxytoca protein is Glucose-6-phosphate isomerase.